The following is an 858-amino-acid chain: RNA-directed RNA polymerase 2a (858 aa).

The RdRp catalytic domain occupies 511-624 (KHCFEIDLSK…FSVLPPVGDP (114 aa)). Residues 772–785 (TKQREKKDGIERRR) show a composition bias toward basic and acidic residues. The interval 772-830 (TKQREKKDGIERRRNDKRRTPTGSYGGGEEAETKVSQAESTGTRSQKSQREGAFKSQAV) is disordered. Residues 805–817 (KVSQAESTGTRSQ) are compositionally biased toward polar residues.

This sequence belongs to the ssRNA positive-strand viruses RNA-directed RNA polymerase family. In terms of assembly, interacts with replication protein 1a.

The catalysed reaction is RNA(n) + a ribonucleoside 5'-triphosphate = RNA(n+1) + diphosphate. Its function is as follows. RNA-dependent RNA polymerase which replicates the viral genome composed of 3 RNA segments, RNA1, RNA2 and RNA3. In Cucumber mosaic virus (strain As) (CMV), this protein is RNA-directed RNA polymerase 2a.